The following is a 401-amino-acid chain: Voltage-gated potassium channel subunit beta-3 (401 aa).

Composition is skewed to polar residues over residues 1–14 and 32–41; these read MQVS…TLRS and GVSMAQTKQR. The interval 1–49 is disordered; that stretch reads MQVSFACTEQTLRSRTSEDRLCPSRPSGGQNGVSMAQTKQRTPPMGAKN. NADP(+) is bound by residues threonine 90, tryptophan 91, glutamine 97, and aspartate 119. Tyrosine 124 functions as the Proton donor/acceptor in the catalytic mechanism. NADP(+)-binding residues include asparagine 192, serine 222, arginine 223, glutamine 248, tryptophan 277, serine 278, proline 279, leucine 280, alanine 281, cysteine 282, lysine 288, arginine 298, glycine 357, serine 359, glutamine 363, glutamate 366, and asparagine 367.

It belongs to the shaker potassium channel beta subunit family. As to quaternary structure, forms heteromultimeric complex with alpha subunits. Identified in potassium channel complexes containing KCNA1 and KCNA2.

The protein resides in the cytoplasm. Functionally, regulatory subunit of the voltage-gated potassium (Kv) channels composed of pore-forming and potassium-conducting alpha subunits and of regulatory beta subunit. The beta-3/KCNAB3 subunit may mediate closure of potassium channels. Increases and accelerates inactivation of Kv1.1/KCNA1 and Kv2.2/KCNA2 subunit-containing channels. May display nicotinamide adenine dinucleotide phosphate (NADPH)-dependent aldoketoreductase activity. The binding of oxidized and reduced NADP(H) cofactors may be required for the regulation of potassium channel activity. The protein is Voltage-gated potassium channel subunit beta-3 (kcnab3) of Xenopus laevis (African clawed frog).